A 224-amino-acid chain; its full sequence is Redox-sensing transcriptional repressor Rex (224 aa).

The H-T-H motif DNA-binding region spans 17 to 56; that stretch reads RYHRYLEELLKNDVKRISSRELSEKMGVTASQIRQDLNNF. 91–96 provides a ligand contact to NAD(+); that stretch reads GAGNLG.

It belongs to the transcriptional regulatory Rex family. Homodimer.

Its subcellular location is the cytoplasm. Functionally, modulates transcription in response to changes in cellular NADH/NAD(+) redox state. This chain is Redox-sensing transcriptional repressor Rex, found in Thermoanaerobacter sp. (strain X514).